The chain runs to 132 residues: Fluoride-specific ion channel FluC 3 (132 aa).

A run of 4 helical transmembrane segments spans residues 4-24 (ILLVGIGGFIGATLRYVFGGW), 32-52 (FPVGTLTINTIGSFFLGLIMY), 66-86 (IFLTIGILGAFTTLSTFGYES), and 95-115 (LMLMSINVVSTVLFSMMAVYL). 2 residues coordinate Na(+): Gly-74 and Thr-77.

This sequence belongs to the fluoride channel Fluc/FEX (TC 1.A.43) family.

It localises to the cell membrane. The catalysed reaction is fluoride(in) = fluoride(out). With respect to regulation, na(+) is not transported, but it plays an essential structural role and its presence is essential for fluoride channel function. Fluoride-specific ion channel. Important for reducing fluoride concentration in the cell, thus reducing its toxicity. This is Fluoride-specific ion channel FluC 3 from Methanosarcina barkeri (strain Fusaro / DSM 804).